The primary structure comprises 457 residues: Proline-specific permease ProY (457 aa).

The Cytoplasmic portion of the chain corresponds to 1–17 (MESKNKLKRGLSTRHIR). A run of 2 helical transmembrane segments spans residues 18–38 (FMALGSAIGTGLFYGSADAIK) and 39–59 (MAGPSVLLAYIIGGIAAYIIM). Topologically, residues 60–84 (RALGEMSVHNPAASSFSRYAQENLG) are cytoplasmic. The chain crosses the membrane as a helical span at residues 85–105 (PLAGYITGWTYCFEILIVAIA). Residues 106-113 (DVTAFGIY) are Periplasmic-facing. Residues 114 to 134 (MGVWFPTVPHWIWVLSVVLII) traverse the membrane as a helical segment. The Cytoplasmic portion of the chain corresponds to 135–156 (CAVNLMSVKVFGELEFWFSFFK). Residues 157 to 177 (VATIIIMIVAGFGIIIWGIGN) form a helical membrane-spanning segment. Residues 178 to 197 (GGQPTGIHNLWSNGGFFSNG) lie on the Periplasmic side of the membrane. A helical transmembrane segment spans residues 198-218 (WLGMVMSLQMVMFAYGGIEII). The Cytoplasmic segment spans residues 219-242 (GITAGEAKDPEKSIPRAINSVPMR). The chain crosses the membrane as a helical span at residues 243 to 263 (ILVFYVGTLFVIMSIYPWNQV). At 264 to 277 (GTAGSPFVLTFQHM) the chain is on the periplasmic side. Residues 278-298 (GITFAASILNFVVLTASLSAI) traverse the membrane as a helical segment. Residues 299–331 (NSDVFGVGRMLHGMAEQGSAPKIFSKTSRRGIP) are Cytoplasmic-facing. Residues 332–352 (WVTVLVMTTALLFAVYLNYIM) form a helical membrane-spanning segment. Over 353 to 355 (PEN) the chain is Periplasmic. A helical membrane pass occupies residues 356–376 (VFLVIASLATFATVWVWIMIL). At 377-399 (LSQIAFRRRLPPEEVKALKFKVP) the chain is on the cytoplasmic side. A helical transmembrane segment spans residues 400–420 (GGVATTIGGLIFLLFIIGLIG). The Periplasmic segment spans residues 421–424 (YHPD). Residues 425–445 (TRISLYVGFAWIVVLLIGWMF) traverse the membrane as a helical segment. Residues 446–457 (KRRHDRQLAENQ) are Cytoplasmic-facing.

It belongs to the amino acid-polyamine-organocation (APC) superfamily. Amino acid transporter (AAT) (TC 2.A.3.1) family.

It is found in the cell inner membrane. Permease that is involved in the transport across the cytoplasmic membrane of proline. The sequence is that of Proline-specific permease ProY (proY) from Escherichia coli O157:H7.